The following is a 231-amino-acid chain: Ureidoacrylate amidohydrolase RutB (231 aa).

Catalysis depends on aspartate 25, which acts as the Proton acceptor. The active site involves lysine 134. Residue cysteine 167 is the Nucleophile of the active site.

It belongs to the isochorismatase family. RutB subfamily.

It carries out the reaction (Z)-3-ureidoacrylate + H2O + H(+) = (Z)-3-aminoacrylate + NH4(+) + CO2. The catalysed reaction is (Z)-3-ureidoacrylate + H2O = (Z)-3-aminoacrylate + carbamate + H(+). The enzyme catalyses (Z)-2-methylureidoacrylate + H2O + H(+) = (Z)-2-methylaminoacrylate + NH4(+) + CO2. Its function is as follows. Hydrolyzes ureidoacrylate to form aminoacrylate and carbamate. The carbamate hydrolyzes spontaneously, thereby releasing one of the nitrogen atoms of the pyrimidine ring as ammonia and one of its carbon atoms as CO2. This Escherichia coli (strain SMS-3-5 / SECEC) protein is Ureidoacrylate amidohydrolase RutB.